The sequence spans 151 residues: Deoxyuridine 5'-triphosphate nucleotidohydrolase (151 aa).

Residues 70-72, asparagine 83, and 87-89 each bind substrate; these read RSG and LID.

This sequence belongs to the dUTPase family. Mg(2+) is required as a cofactor.

It carries out the reaction dUTP + H2O = dUMP + diphosphate + H(+). It participates in pyrimidine metabolism; dUMP biosynthesis; dUMP from dCTP (dUTP route): step 2/2. Functionally, this enzyme is involved in nucleotide metabolism: it produces dUMP, the immediate precursor of thymidine nucleotides and it decreases the intracellular concentration of dUTP so that uracil cannot be incorporated into DNA. In Methylococcus capsulatus (strain ATCC 33009 / NCIMB 11132 / Bath), this protein is Deoxyuridine 5'-triphosphate nucleotidohydrolase.